A 1172-amino-acid chain; its full sequence is Protein diaphanous homolog 3 (1172 aa).

Positions Met-1–Ala-15 are enriched in basic and acidic residues. A disordered region spans residues Met-1–Arg-36. A Nuclear localization signal motif is present at residues Ser-16–Leu-39. Position 47 is a phosphothreonine (Thr-47). Ser-56 is subject to Phosphoserine. The disordered stretch occupies residues Ile-57–Ser-96. A compositionally biased stretch (low complexity) spans Ser-77–Ser-87. Positions Pro-94 to Asp-456 constitute a GBD/FH3 domain. The residue at position 155 (Ser-155) is a Phosphoserine. Residues Cys-493 to Gln-530 are a coiled coil. Positions Pro-535–Pro-586 are disordered. Residues Pro-541–Pro-611 form the FH1 domain. The segment covering Ser-553–Pro-581 has biased composition (pro residues). An FH2 domain is found at Pro-616–Arg-1014. Residues Asp-1037 to Asp-1067 enclose the DAD domain. Phosphoserine occurs at positions 1073 and 1158. The Nuclear export signal motif lies at Glu-1163 to Leu-1172.

Belongs to the formin homology family. Diaphanous subfamily. Post-translationally, ubiquitinated. In terms of tissue distribution, expressed in testis. Present in Sertoli cells (at protein level).

It is found in the cytoplasm. Its subcellular location is the nucleus. Actin nucleation and elongation factor required for the assembly of F-actin structures, such as actin cables and stress fibers. Required for cytokinesis, stress fiber formation and transcriptional activation of the serum response factor. Binds to GTP-bound form of Rho and to profilin: acts in a Rho-dependent manner to recruit profilin to the membrane, where it promotes actin polymerization. DFR proteins couple Rho and Src tyrosine kinase during signaling and the regulation of actin dynamics. Also acts as an actin nucleation and elongation factor in the nucleus by promoting nuclear actin polymerization inside the nucleus to drive serum-dependent SRF-MRTFA activity. This Rattus norvegicus (Rat) protein is Protein diaphanous homolog 3.